Consider the following 349-residue polypeptide: ALA-interacting subunit 3 (349 aa).

The span at Met-1–Ala-21 shows a compositional bias: low complexity. Residues Met-1–Tyr-30 form a disordered region. Residue Ser-2 is modified to N-acetylserine. Residues Val-50–Phe-70 form a helical membrane-spanning segment. N-linked (GlcNAc...) asparagine glycosylation is found at Asn-181, Asn-190, and Asn-223. Residues Leu-305–Ile-325 form a helical membrane-spanning segment.

It belongs to the CDC50/LEM3 family. As to quaternary structure, interacts with ALA2 and ALA3 in a heterologous system. Expressed in roots, leaves, stems, flowers and siliques.

The protein resides in the golgi apparatus membrane. The protein localises to the prevacuolar compartment membrane. It localises to the endoplasmic reticulum membrane. Required for the lipid transport activity of the ALA/ALIS P4-ATPase complex. The chain is ALA-interacting subunit 3 (ALIS3) from Arabidopsis thaliana (Mouse-ear cress).